The chain runs to 236 residues: MDAVSVVYGITAAGFAVGVAIVGFLYASLEGSDERPILAALALIPGVAGISYVAMVFGIGTVTIGETTLVGFRYLDWVVTTPLLVGFIGYTAGASRRAIFGVMAADALMILAGVGAVVAAGTLKWALFGVSAVFHISLFAYLYLIFPRSVPDDPQRIGLFSLLKNHVGLLWIAYPLVWLAGPEGLGFATYVGVSITYAFLDLLAKVPYVYFFYARRQVFATKLLRDSGDTTVTPAD.

A run of 7 helical transmembrane segments spans residues valine 6–tyrosine 26, isoleucine 37–phenylalanine 57, tyrosine 74–alanine 94, alanine 98–valine 118, alanine 126–phenylalanine 146, valine 167–phenylalanine 187, and glycine 192–phenylalanine 212. Lysine 205 carries the post-translational modification N6-(retinylidene)lysine.

The protein belongs to the archaeal/bacterial/fungal opsin family. In terms of assembly, interacts with Htr1. Post-translationally, the covalent binding of retinal to the apoprotein, bacterioopsin, generates bacteriorhodopsin.

It is found in the membrane. Photoattractant rhodopsin. This is Sensory rhodopsin I (sop1) from Haloarcula marismortui (strain ATCC 43049 / DSM 3752 / JCM 8966 / VKM B-1809) (Halobacterium marismortui).